Here is a 138-residue protein sequence, read N- to C-terminus: Cysteine desulfuration protein SufE (138 aa).

Cysteine 51 serves as the catalytic Cysteine persulfide intermediate.

This sequence belongs to the SufE family. As to quaternary structure, homodimer. Interacts with SufS.

It is found in the cytoplasm. Its pathway is cofactor biosynthesis; iron-sulfur cluster biosynthesis. In terms of biological role, participates in cysteine desulfuration mediated by SufS. Cysteine desulfuration mobilizes sulfur from L-cysteine to yield L-alanine and constitutes an essential step in sulfur metabolism for biosynthesis of a variety of sulfur-containing biomolecules. Functions as a sulfur acceptor for SufS, by mediating the direct transfer of the sulfur atom from the S-sulfanylcysteine of SufS, an intermediate product of cysteine desulfuration process. This chain is Cysteine desulfuration protein SufE, found in Pectobacterium carotovorum subsp. carotovorum (strain PC1).